A 636-amino-acid polypeptide reads, in one-letter code: Epithelial sodium channel subunit alpha (636 aa).

A disordered region spans residues methionine 1–alanine 28. Topologically, residues methionine 1 to threonine 77 are cytoplasmic. The chain crosses the membrane as a helical span at residues alanine 78–isoleucine 98. Residues tyrosine 99–serine 549 lie on the Extracellular side of the membrane. 10 disulfide bridges follow: cysteine 126–cysteine 293, cysteine 218–cysteine 225, cysteine 270–cysteine 277, cysteine 381–cysteine 466, cysteine 403–cysteine 443, cysteine 403–cysteine 462, cysteine 407–cysteine 458, cysteine 416–cysteine 443, cysteine 416–cysteine 466, and cysteine 418–cysteine 432. Residues valine 550–leucine 570 traverse the membrane as a helical segment. The Cytoplasmic segment spans residues alanine 571–glutamate 636.

The protein belongs to the amiloride-sensitive sodium channel (TC 1.A.6) family. SCNN1A subfamily. Heterotrimer; containing an alpha/SCNN1A, a beta/SCNN1B and a gamma/SCNN1G subunit.

Its subcellular location is the apical cell membrane. The protein localises to the cell projection. The protein resides in the cilium. It is found in the cytoplasmic granule. It localises to the cytoplasm. Its subcellular location is the cytoplasmic vesicle. The protein localises to the secretory vesicle. The protein resides in the acrosome. It is found in the flagellum. It carries out the reaction Na(+)(in) = Na(+)(out). Its activity is regulated as follows. Originally identified and characterized by its inhibition by the diuretic drug amiloride. In terms of biological role, this is one of the three pore-forming subunits of the heterotrimeric epithelial sodium channel (ENaC), a critical regulator of sodium balance and fluid homeostasis. ENaC operates in epithelial tissues, where it mediates the electrodiffusion of sodium ions from extracellular fluid through the apical membrane of cells, with water following osmotically. The chain is Epithelial sodium channel subunit alpha from Anolis carolinensis (Green anole).